Reading from the N-terminus, the 153-residue chain is Endoribonuclease YbeY (153 aa).

Positions 113, 117, and 123 each coordinate Zn(2+).

It belongs to the endoribonuclease YbeY family. It depends on Zn(2+) as a cofactor.

It localises to the cytoplasm. In terms of biological role, single strand-specific metallo-endoribonuclease involved in late-stage 70S ribosome quality control and in maturation of the 3' terminus of the 16S rRNA. The protein is Endoribonuclease YbeY of Aliivibrio fischeri (strain MJ11) (Vibrio fischeri).